Reading from the N-terminus, the 194-residue chain is Threonylcarbamoyl-AMP synthase (194 aa).

The 184-residue stretch at F11–G194 folds into the YrdC-like domain.

The protein belongs to the SUA5 family. TsaC subfamily.

The protein resides in the cytoplasm. It catalyses the reaction L-threonine + hydrogencarbonate + ATP = L-threonylcarbamoyladenylate + diphosphate + H2O. Its function is as follows. Required for the formation of a threonylcarbamoyl group on adenosine at position 37 (t(6)A37) in tRNAs that read codons beginning with adenine. Catalyzes the conversion of L-threonine, HCO(3)(-)/CO(2) and ATP to give threonylcarbamoyl-AMP (TC-AMP) as the acyladenylate intermediate, with the release of diphosphate. This is Threonylcarbamoyl-AMP synthase from Wigglesworthia glossinidia brevipalpis.